Consider the following 519-residue polypeptide: Ent-kaurene oxidase (519 aa).

The Chloroplast intermembrane portion of the chain corresponds to 1 to 10 (MDTLLSLQAV). Residues 11 to 31 (PAAAAIGGPVVAIGGITLFFI) form a helical membrane-spanning segment. Over 32 to 519 (REYVKDQRKK…PRLRDRVCVS (488 aa)) the chain is Cytoplasmic. C458 lines the heme pocket.

Belongs to the cytochrome P450 family. Heme is required as a cofactor.

The protein resides in the plastid. Its subcellular location is the chloroplast outer membrane. The enzyme catalyses ent-kaur-16-ene + 3 reduced [NADPH--hemoprotein reductase] + 3 O2 = ent-kaur-16-en-19-oate + 3 oxidized [NADPH--hemoprotein reductase] + 4 H2O + 4 H(+). It functions in the pathway plant hormone biosynthesis; gibberellin biosynthesis. Catalyzes three successive oxidations of the 4-methyl group of ent-kaurene giving kaurenoic acid, a key step in gibberellins (GAs) biosynthesis. GAs, which are involved many processes, including stem elongation, play a central role in plant development. The polypeptide is Ent-kaurene oxidase (Salvia miltiorrhiza (Chinese sage)).